A 181-amino-acid chain; its full sequence is uncharacterized protein (181 aa).

The signal sequence occupies residues 1-19 (MRRLLACSAGVLCFSQLGA).

This is an uncharacterized protein from Treponema pallidum (strain Nichols).